The chain runs to 1189 residues: Origin recognition complex subunit 1 (1189 aa).

The required for peripherial nuclear localization stretch occupies residues 1-53; it reads MTPKKKIFQNFQANDNEILSPTKKGIKLNVSKLNILNFENTIITKEKTNYEYK. The residue at position 2 (threonine 2) is a Phosphothreonine. A Phosphoserine modification is found at serine 20. Leucine heptad repeat repeat units lie at residues 137–143, 144–150, 151–157, and 158–164; these read LTNISSS and LSNSLDE. The segment covering 239–248 has biased composition (basic residues); the sequence is KKNISKKNTH. Disordered regions lie at residues 239 to 421 and 679 to 749; these read KKNI…DHTD and DTQA…QSSL. Residues 254–279 show a composition bias toward basic and acidic residues; the sequence is QNDKNKEKNKEKDKNIKKDRDKDIQT. Low complexity predominate over residues 304–320; sequence NNDNVKNNLKNNINNNN. A compositionally biased stretch (polar residues) spans 321–339; it reads TLKRSSQSVRIDSDLSSAH. Low complexity predominate over residues 353 to 381; sequence HRNNNNNNNNNNKTTSNNHNKNNKINNNN. Positions 385-394 are enriched in basic and acidic residues; sequence NYKKQTDTKH. Positions 395 to 411 are enriched in low complexity; the sequence is TNNTQNNKYNKTKTTNT. Over residues 695-709 the composition is skewed to polar residues; the sequence is KAQTTTNVKANTHTK. Basic and acidic residues-rich tracts occupy residues 710 to 724 and 733 to 742; these read TLND…KNKE and DVKKKSDPHN. Residues valine 780 and 815–823 contribute to the ATP site; that span reads GMPGTGKTA. Residues aspartate 903 and glutamate 904 each contribute to the Mg(2+) site. Glutamate 904 provides a ligand contact to ATP. The PIP-box motif lies at 913–922; the sequence is QKVLFTLFDW. Residues asparagine 937 and arginine 1003 each contribute to the ATP site.

It belongs to the ORC1 family. In terms of assembly, component of the origin recognition complex (ORC). Interacts (via PIP-box) with PCNA1; the interaction occurs during DNA replication in trophozoites. Post-translationally, in schizonts, may be phosphorylated by PK5; phosphorylation leads to ORC1 dissociation from the telomeres and var gene promoters, translocation to the cytoplasm, where it is degraded by the proteasome.

The protein resides in the nucleus. It is found in the chromosome. The protein localises to the telomere. Its subcellular location is the nucleolus. It carries out the reaction ATP + H2O = ADP + phosphate + H(+). Its function is as follows. Component of the origin recognition complex (ORC) that binds origins of replication and thus may regulate the initiation of DNA replication. DNA-binding may not be ATP-dependent. In a SIR2A/Sir2-dependent manner, binds to and silences telomers and subtelomeric repeat regions (TAREs). In a SIR2A/Sir2-dependent manner, binds to promoters of var genes localized next to TAREs resulting in their silencing. In Plasmodium falciparum (isolate 3D7), this protein is Origin recognition complex subunit 1.